The primary structure comprises 92 residues: Small ribosomal subunit protein uS19 (92 aa).

Belongs to the universal ribosomal protein uS19 family.

Functionally, protein S19 forms a complex with S13 that binds strongly to the 16S ribosomal RNA. This chain is Small ribosomal subunit protein uS19, found in Corynebacterium efficiens (strain DSM 44549 / YS-314 / AJ 12310 / JCM 11189 / NBRC 100395).